Here is a 110-residue protein sequence, read N- to C-terminus: Protein YcgL (110 aa).

Residues Met14–Leu98 form the YcgL domain. The segment at Pro88–Arg110 is disordered. The span at His97–Arg110 shows a compositional bias: polar residues.

This is Protein YcgL from Salmonella paratyphi A (strain ATCC 9150 / SARB42).